The following is a 142-amino-acid chain: RNA-directed DNA polymerase homolog (142 aa).

The protein localises to the mitochondrion. The enzyme catalyses RNA(n) + a ribonucleoside 5'-triphosphate = RNA(n+1) + diphosphate. In Oenothera berteroana (Bertero's evening primrose), this protein is RNA-directed DNA polymerase homolog.